Reading from the N-terminus, the 819-residue chain is USP6 N-terminal-like protein (819 aa).

Met1 bears the N-acetylmethionine mark. The region spanning 100–292 (GIPLQLRGEV…RIWDIYIFEG (193 aa)) is the Rab-GAP TBC domain. Residues 355 to 367 (DLPEPGKEDEYPK) show a composition bias toward basic and acidic residues. Disordered regions lie at residues 355-498 (DLPE…ERTT) and 513-678 (LPVA…SRPT). Phosphoserine occurs at positions 389, 394, and 398. Basic and acidic residues-rich tracts occupy residues 399–414 (SRREDGSPRKNHEHSP) and 432–449 (KSVDEGSKNLKHEAESQR). Residues 464–476 (HAAANQNSNAISN) show a composition bias toward low complexity. Basic and acidic residues-rich tracts occupy residues 477–489 (VRKEFMPKWRKPS) and 533–542 (KALDGGEGKR). Ser544 and Ser547 each carry phosphoserine. Positions 556–571 (ESEHGASAEEGPERTH) are enriched in basic and acidic residues. A phosphoserine mark is found at Ser574, Ser631, Ser644, Ser648, Ser665, Ser669, and Ser704. A compositionally biased stretch (polar residues) spans 642 to 655 (FVSTQISPRPQINP). A Phosphotyrosine modification is found at Tyr717. Low complexity predominate over residues 788-802 (ASPPGYPYAGPSPSA). Positions 788–807 (ASPPGYPYAGPSPSAHHYRN) are disordered.

Interacts with EPS8.

It localises to the golgi apparatus. The protein localises to the cytoplasmic vesicle. In terms of biological role, acts as a GTPase-activating protein for RAB5A and RAB43. Involved in receptor trafficking. In complex with EPS8 inhibits internalization of EGFR. Involved in retrograde transport from the endocytic pathway to the Golgi apparatus. Involved in the transport of Shiga toxin from early and recycling endosomes to the trans-Golgi network. Required for structural integrity of the Golgi complex. The protein is USP6 N-terminal-like protein (Usp6nl) of Mus musculus (Mouse).